Consider the following 1221-residue polypeptide: MTDSTYDFGAVRDDLTPLEDDCKLLGSLLDDCLRVEIGETMFKKIERIRALAQCASNLSIKGDAGASDMLSHRLAEELMNLDMDEAVPLTRACGHYLNLSGIAELHHGVRRDRATREPNPNSCDAVFARLITEGVDPEELYRAVSEQNVEVVLTAHPTQVNRRTLQYKHTRIAALLQQHDRSDLTAEERRNMVSELQREVAALWQTDELRRQKPTPLDEARGGLHIVEQSLWAAVPQYMRRLSAALKKHTGHDLPLQATPFRFGSWMGGDRDGNPNVTAKVTAHVTALARWMAADLYLREIDTLRFELSMNQCSAAVWKMARRIIAEGHTKRAGVVRAKAAAALHQTATDAASHGGSAASAAAAAAAGGDVVADGTSGGGAAAAAGPAAAAAADDAFTFSRLGRPRPERPSTDVRSVGVLAGGEGAAFPGGMILGTQPVSAHTAAEVSVPHELPGQDVEGGSEMDFNESRRASDAGDLGASQHPMLGGPSAGASAEPTAHGYTTTATAAAAAADGTQPEPEVPGTPSYADPGTPDRLGALPGPFTPGPTPFREAANAAMSTAASGGAGGGGGGGANRAASGLGGDPTFTRRSLMAQRLGTSSVQFARAHEHPGFHPYRIVLGHVRDRLAATRRRMEDLLSGREPAGEAHGGVGAGGGGGGGAAPWYESEDELAEPLMACYWSLWECGGGVIADGRLLDLIRRVYTFGMCLMKLDLRQESTRHAEALDAVTSYLGLGSYLEWSEDQKIEWLTKELQGRRPLIPADMPMSAEVREVLDTFKVAAHLGRDNLGAYVISMTKGASDVMAVELLQREARMQVGAEAGGRGGGGPEDGGSLRVVPLFETLEDLDAAEDVMTRLLTNPWYREHLRAVHGDAQEVMLGYSDSGKDAGRLAANWALYKCQERLVAITKANNVKLTLFHGRGGTVGRGGGPTHIAIQSQPPGSVEGTFRITEQGEMVQAKFGISGVALSQLETYTTAVLLATMRPPSPPRREEWRAVMEMLSRVSCESYRNIVHHSPLFLRYFKHATPEAELGNLYIGSRPARRRNKDASISTLRAIPWIFAWTQNRLILPSWLGIGAALTAAMTQGHLPTLQAMYREWPFFGSTVDLIEMILAKTDPRIAALYEEVLVNDPEEKKLGAELRERLQRCQGAILKVTGHENLLSNNPTLSKLISMRSPFVDPINILQVEVLRRLRQDPNNMRLRDALLISINGIAAGMRNTG.

His-156 is an active-site residue. 2 disordered regions span residues 443–588 and 642–661; these read TAAE…DPTF and REPAGEAHGGVGAGGGGGGG. Composition is skewed to low complexity over residues 503–513 and 550–564; these read TTTATAAAAAA and PFREAANAAMSTAAS. Composition is skewed to gly residues over residues 565 to 575 and 648 to 661; these read GGAGGGGGGGA and AHGGVGAGGGGGGG. Lys-886 is an active-site residue.

This sequence belongs to the PEPCase type 1 family. It depends on Mg(2+) as a cofactor.

It localises to the cytoplasm. It catalyses the reaction oxaloacetate + phosphate = phosphoenolpyruvate + hydrogencarbonate. Its function is as follows. Through the carboxylation of phosphoenolpyruvate (PEP) it forms oxaloacetate, a four-carbon dicarboxylic acid source for the tricarboxylic acid cycle. The protein is Phosphoenolpyruvate carboxylase 2 of Chlamydomonas reinhardtii (Chlamydomonas smithii).